We begin with the raw amino-acid sequence, 254 residues long: Phosphatidylglycerophosphatase B (254 aa).

A helical membrane pass occupies residues 2–24 (RSIARRTAVGAALLLVMPVAVWI). The Periplasmic portion of the chain corresponds to 25-54 (SGWRWQPGEQSWLLKAAFWVTETVTQPWGV). Residues 55-66 (ITHLILFGWFLW) form a helical membrane-spanning segment. At 67–71 (CLRFR) the chain is on the cytoplasmic side. Residues 72-94 (IKAAFVLFAILAAAILVGQGVKS) form a helical membrane-spanning segment. The Periplasmic segment spans residues 95–161 (WIKDKVQEPR…QKETGFAFPS (67 aa)). Residues 97-105 (KDKVQEPRP) are phosphatase sequence motif I. The segment at 160–163 (PSGH) is phosphatase sequence motif II. The helical transmembrane segment at 162–176 (GHTMFAASWALLAVG) threads the bilayer. Residue His-163 is the Proton donor; for a subset of substrates of the active site. Residues 177 to 182 (LLWPRR) are Cytoplasmic-facing. The chain crosses the membrane as a helical span at residues 183–202 (RTLTIAILLVWATGVMGSRL). Positions 200-211 (SRLLLGMHWPRD) are phosphatase sequence motif III. Topologically, residues 203 to 208 (LLGMHW) are periplasmic. The active-site Nucleophile is the His-207. The helical transmembrane segment at 209–232 (PRDLVVATLISWALVAVATWLAQR) threads the bilayer. The Cytoplasmic portion of the chain corresponds to 233–254 (ICGPLTPPAEENREIAQREQES).

The protein belongs to the PA-phosphatase related phosphoesterase family. In terms of processing, the N-terminus is blocked.

It is found in the cell inner membrane. The protein resides in the cell outer membrane. The catalysed reaction is a 1,2-diacyl-sn-glycero-3-phospho-(1'-sn-glycero-3'-phosphate) + H2O = a 1,2-diacyl-sn-glycero-3-phospho-(1'-sn-glycerol) + phosphate. It catalyses the reaction a 1,2-diacyl-sn-glycerol 3-diphosphate + H2O = a 1,2-diacyl-sn-glycero-3-phosphate + phosphate + H(+). It carries out the reaction a 1,2-diacyl-sn-glycero-3-phosphate + H2O = a 1,2-diacyl-sn-glycerol + phosphate. The enzyme catalyses di-trans,octa-cis-undecaprenyl diphosphate + H2O = di-trans,octa-cis-undecaprenyl phosphate + phosphate + H(+). Its pathway is phospholipid metabolism; phosphatidylglycerol biosynthesis; phosphatidylglycerol from CDP-diacylglycerol: step 2/2. Functionally, catalyzes the dephosphorylation of diacylglycerol diphosphate (DGPP) to phosphatidate (PA) and the subsequent dephosphorylation of PA to diacylglycerol (DAG). Also has undecaprenyl pyrophosphate phosphatase activity, required for the biosynthesis of the lipid carrier undecaprenyl phosphate. Can also use lysophosphatidic acid (LPA) and phosphatidylglycerophosphate as substrates. The pattern of activities varies according to subcellular location, PGP phosphatase activity is higher in the cytoplasmic membrane, whereas PA and LPA phosphatase activities are higher in the outer membrane. Activity is independent of a divalent cation ion and insensitive to inhibition by N-ethylmaleimide. The protein is Phosphatidylglycerophosphatase B (pgpB) of Escherichia coli O157:H7.